The chain runs to 395 residues: Teichoic acid D-alanyltransferase (395 aa).

The Extracellular segment spans residues Met1–Ser6. Residues Phe7–Asn26 form a helical membrane-spanning segment. Residues Gly27–Phe30 are Cytoplasmic-facing. The chain crosses the membrane as a helical span at residues Gln31–Phe46. Residues Ser47–Leu50 lie on the Extracellular side of the membrane. Residues His51–Lys76 traverse the membrane as a helical segment. The Cytoplasmic segment spans residues Ala77–Ser79. The helical transmembrane segment at Gly80–Ser104 threads the bilayer. Over His105–Gly120 the chain is Extracellular. Residues Ile121 to Asp137 traverse the membrane as a helical segment. The Cytoplasmic portion of the chain corresponds to Gly138 to Pro145. Residues Leu146–Gln175 lie within the membrane without spanning it. Topologically, residues Lys176–Thr179 are cytoplasmic. A helical membrane pass occupies residues Lys180–Lys223. Residue Ile224 is a topological domain, extracellular. Residues Leu225–Met256 form a helical membrane-spanning segment. Topologically, residues Gly257–Lys266 are cytoplasmic. Residues Pro267–Lys303 lie within the membrane without spanning it. The Cytoplasmic segment spans residues Lys304–Asn308. The chain crosses the membrane as a helical span at residues Arg309–His328. His328 is an active-site residue. At Gly329–Gln333 the chain is on the extracellular side. Residues Tyr334 to Phe351 form a helical membrane-spanning segment. Residues Glu352 to Asn364 are Cytoplasmic-facing. A helical transmembrane segment spans residues Arg365 to Ser387. Over Gly388–His395 the chain is Extracellular.

Belongs to the membrane-bound acyltransferase family.

Its subcellular location is the cell membrane. It participates in cell wall biogenesis; lipoteichoic acid biosynthesis. Functionally, O-acyltransferase that catalyzes D-alanylation of both teichoic acid and lipoteichoic acid (LTA). D-alanylation of LTA plays an important role in modulating the properties of the cell wall in Gram-positive bacteria, influencing the net charge of the cell wall. Catalyzes D-alanylation from DltC carrier protein. This Bacillus subtilis (strain 168) protein is Teichoic acid D-alanyltransferase.